A 434-amino-acid chain; its full sequence is Chaperone SurA (434 aa).

The signal sequence occupies residues 1 to 22 (MKPSKHLIFALFALAISQPTMA). 2 PpiC domains span residues 173–274 (DVEY…KIMD) and 283–383 (IEEV…QLEE).

The protein localises to the periplasm. It catalyses the reaction [protein]-peptidylproline (omega=180) = [protein]-peptidylproline (omega=0). Its function is as follows. Chaperone involved in the correct folding and assembly of outer membrane proteins. Recognizes specific patterns of aromatic residues and the orientation of their side chains, which are found more frequently in integral outer membrane proteins. May act in both early periplasmic and late outer membrane-associated steps of protein maturation. In Shewanella sp. (strain MR-7), this protein is Chaperone SurA.